Here is a 155-residue protein sequence, read N- to C-terminus: Sec-independent protein translocase protein TatB (155 aa).

The chain crosses the membrane as a helical span at residues 1 to 21 (MIDLGISKIALIGAVALIVIG). 2 disordered regions span residues 81–103 (ASDFEKSWSETTGSTSSDALPGF) and 131–155 (SGIRTKAQSGAARVARFRPQPSRKA). Positions 89-98 (SETTGSTSSD) are enriched in polar residues.

The protein belongs to the TatB family. In terms of assembly, the Tat system comprises two distinct complexes: a TatABC complex, containing multiple copies of TatA, TatB and TatC subunits, and a separate TatA complex, containing only TatA subunits. Substrates initially bind to the TatABC complex, which probably triggers association of the separate TatA complex to form the active translocon.

It is found in the cell inner membrane. Functionally, part of the twin-arginine translocation (Tat) system that transports large folded proteins containing a characteristic twin-arginine motif in their signal peptide across membranes. Together with TatC, TatB is part of a receptor directly interacting with Tat signal peptides. TatB may form an oligomeric binding site that transiently accommodates folded Tat precursor proteins before their translocation. This is Sec-independent protein translocase protein TatB from Polaromonas naphthalenivorans (strain CJ2).